The chain runs to 209 residues: Large ribosomal subunit protein uL3 (209 aa).

Belongs to the universal ribosomal protein uL3 family. As to quaternary structure, part of the 50S ribosomal subunit. Forms a cluster with proteins L14 and L19.

In terms of biological role, one of the primary rRNA binding proteins, it binds directly near the 3'-end of the 23S rRNA, where it nucleates assembly of the 50S subunit. The polypeptide is Large ribosomal subunit protein uL3 (Moorella thermoacetica (strain ATCC 39073 / JCM 9320)).